The following is a 36-amino-acid chain: Dolichyl-diphosphooligosaccharide--protein glycosyltransferase subunit 2 (36 aa).

The protein belongs to the SWP1 family. In terms of assembly, component of the oligosaccharyltransferase (OST) complex.

It is found in the endoplasmic reticulum. It localises to the endoplasmic reticulum membrane. Its pathway is protein modification; protein glycosylation. Its function is as follows. Subunit of the oligosaccharyl transferase (OST) complex that catalyzes the initial transfer of a defined glycan (Glc(3)Man(9)GlcNAc(2) in eukaryotes) from the lipid carrier dolichol-pyrophosphate to an asparagine residue within an Asn-X-Ser/Thr consensus motif in nascent polypeptide chains, the first step in protein N-glycosylation. N-glycosylation occurs cotranslationally and the complex associates with the Sec61 complex at the channel-forming translocon complex that mediates protein translocation across the endoplasmic reticulum (ER). All subunits are required for a maximal enzyme activity. This chain is Dolichyl-diphosphooligosaccharide--protein glycosyltransferase subunit 2, found in Gallus gallus (Chicken).